A 335-amino-acid chain; its full sequence is 2,4-dienoyl-CoA reductase [(3E)-enoyl-CoA-producing], mitochondrial (335 aa).

The N-terminal 34 residues, 1–34 (MALLGRAFFAGVSRLPCDPGPQRFFSFGTKTLYQ), are a transit peptide targeting the mitochondrion. N6-acetyllysine; alternate occurs at positions 42 and 49. An N6-succinyllysine; alternate mark is found at K42 and K49. 66–71 (GGGTGL) serves as a coordination point for NADP(+). The residue at position 69 (T69) is a Phosphothreonine. K73 is subject to N6-succinyllysine. An NADP(+)-binding site is contributed by R91. Position 91 (R91) interacts with substrate. 2 positions are modified to N6-acetyllysine; alternate: K97 and K106. Residues K97 and K106 each carry the N6-succinyllysine; alternate modification. Residue D117 coordinates NADP(+). Substrate-binding residues include R119 and F149. Y199 acts as the Proton acceptor in catalysis. Residues K214 and 240–243 (PGPI) contribute to the NADP(+) site. An N6-acetyllysine; alternate modification is found at K244. K244 is modified (N6-succinyllysine; alternate). A substrate-binding site is contributed by R251. K260 carries the post-translational modification N6-acetyllysine; alternate. Position 260 is an N6-succinyllysine; alternate (K260). N6-acetyllysine is present on K315. N6-acetyllysine; alternate is present on K319. K319 bears the N6-succinyllysine; alternate mark.

This sequence belongs to the short-chain dehydrogenases/reductases (SDR) family. 2,4-dienoyl-CoA reductase subfamily. Homotetramer.

It localises to the mitochondrion. It catalyses the reaction a (2E,4E)-dienoyl-CoA + NADPH + H(+) = a 4,5-saturated-(3E)-enoyl-CoA + NADP(+). The catalysed reaction is a (2E,4Z)-dienoyl-CoA + NADPH + H(+) = a 4,5-saturated-(3E)-enoyl-CoA + NADP(+). It carries out the reaction (2E,4E)-hexadienoyl-CoA + NADPH + H(+) = (3E)-hexenoyl-CoA + NADP(+). Auxiliary enzyme of beta-oxidation. It participates in the metabolism of unsaturated fatty enoyl-CoA esters having double bonds in both even- and odd-numbered positions in mitochondria. Catalyzes the NADP-dependent reduction of 2,4-dienoyl-CoA to yield trans-3-enoyl-CoA. The protein is 2,4-dienoyl-CoA reductase [(3E)-enoyl-CoA-producing], mitochondrial (Decr1) of Mus musculus (Mouse).